The primary structure comprises 284 residues: Tropomyosin (284 aa).

Residues Met-1–Tyr-284 are a coiled coil. Positions Asn-202–Glu-213 are enriched in polar residues. The disordered stretch occupies residues Asn-202–Glu-223. The segment covering Ala-214–Glu-223 has biased composition (basic and acidic residues).

It belongs to the tropomyosin family. Homodimer.

Tropomyosin, in association with the troponin complex, plays a central role in the calcium dependent regulation of muscle contraction. The chain is Tropomyosin from Haliotis rufescens (California red abalone).